The sequence spans 548 residues: Glucose-6-phosphate isomerase (548 aa).

Catalysis depends on E353, which acts as the Proton donor. Residues H384 and K512 contribute to the active site.

This sequence belongs to the GPI family.

It localises to the cytoplasm. It catalyses the reaction alpha-D-glucose 6-phosphate = beta-D-fructose 6-phosphate. It participates in carbohydrate biosynthesis; gluconeogenesis. Its pathway is carbohydrate degradation; glycolysis; D-glyceraldehyde 3-phosphate and glycerone phosphate from D-glucose: step 2/4. Catalyzes the reversible isomerization of glucose-6-phosphate to fructose-6-phosphate. The sequence is that of Glucose-6-phosphate isomerase from Chlorobium chlorochromatii (strain CaD3).